A 246-amino-acid polypeptide reads, in one-letter code: Protein lin-37 homolog (246 aa).

N-acetylmethionine is present on methionine 1. Residues lysine 5 and lysine 7 each participate in a glycyl lysine isopeptide (Lys-Gly) (interchain with G-Cter in SUMO2) cross-link. A compositionally biased stretch (basic and acidic residues) spans 36 to 55; it reads DRERLDEEPGKTSLDTHNKD. 2 disordered regions span residues 36 to 90 and 127 to 209; these read DRER…GGPQ and PTVR…LIYR. A phosphoserine mark is found at serine 135 and serine 138. Pro residues predominate over residues 163-172; sequence LPPPTAPGPP. Phosphothreonine is present on threonine 167. A phosphoserine mark is found at serine 182 and serine 202.

As to quaternary structure, component of the DREAM complex (also named LINC complex) at least composed of E2F4, E2F5, LIN9, LIN37, LIN52, LIN54, MYBL1, MYBL2, RBL1, RBL2, RBBP4, TFDP1 and TFDP2. The complex exists in quiescent cells where it represses cell cycle-dependent genes. It dissociates in S phase when LIN9, LIN37, LIN52 and LIN54 form a subcomplex that binds to MYBL2.

In Bos taurus (Bovine), this protein is Protein lin-37 homolog (LIN37).